A 304-amino-acid polypeptide reads, in one-letter code: MATH domain and coiled-coil domain-containing protein At2g42470 (304 aa).

The region spanning 6–123 is the MATH domain; that stretch reads QTSFTFEIDN…NNKLIIEVQV (118 aa). Residues 219 to 292 are a coiled coil; that stretch reads FKVDWLKKKL…LKIELDRTRR (74 aa).

The sequence is that of MATH domain and coiled-coil domain-containing protein At2g42470 from Arabidopsis thaliana (Mouse-ear cress).